Consider the following 577-residue polypeptide: Outer spore wall assembly protein SHE10 (577 aa).

Positions 1–23 (MGKLIKLITTLTVLVSLLQYCCE) are cleaved as a signal peptide. Coiled-coil stretches lie at residues 379–416 (NETRSTLDELTNAMEKDLSEITDEIEKKVNAIREENVE) and 513–561 (ILRS…EEDV). A compositionally biased stretch (basic and acidic residues) spans 525 to 545 (RERKERERKEREKAAAEEFQR). The tract at residues 525-577 (RERKERERKEREKAAAEEFQRQQELLRQQEEEDEEDVSYTSTSTITTTTTMTL) is disordered. Low complexity predominate over residues 562–577 (SYTSTSTITTTTTMTL).

The protein belongs to the SHE10 family. In terms of assembly, component of the mitochondria-localized RNase mitochondrial RNA-processing (RNase MRP) composed of one single RNA encoded by the NME1 gene and at least 31 proteins. Absent in the nucleus-localized RNase MRP (NuMRP).

The protein localises to the mitochondrion. In terms of biological role, involved in spore wall assembly. May be a component of the mitochondrial RNase MRP (MtMRP), a ribonucleoprotein endoribonuclease involved in the cleaving RNA transcripts to generate primers for DNA replication in mitochondria. This is Outer spore wall assembly protein SHE10 from Saccharomyces cerevisiae (strain Lalvin EC1118 / Prise de mousse) (Baker's yeast).